The following is a 293-amino-acid chain: Non-homologous end joining protein Ku (293 aa).

Residues isoleucine 10–alanine 195 enclose the Ku domain. Residues serine 216 to lysine 229 form a required for dimerization region. A disordered region spans residues arginine 260–alanine 293. The segment covering glycine 265 to glycine 280 has biased composition (basic and acidic residues).

Belongs to the prokaryotic Ku family. As to quaternary structure, homodimer, may form higher-order multimers on DNA. Non-dimerized protein does not stimulate LigD ligase activity. Probably interacts with LigD.

Its function is as follows. With LigD forms a non-homologous end joining (NHEJ) DNA repair enzyme, which repairs dsDNA breaks with reduced fidelity. Stimulates rNTP addition to DSB and end joining (ligation) of linear DNA by LigD, on 3'-overhangs and probably also 5'-overhangs and blunt dsDNA breaks. Binds both ends of linear dsDNA protecting it from exonuclease activity. This Pseudomonas aeruginosa (strain ATCC 15692 / DSM 22644 / CIP 104116 / JCM 14847 / LMG 12228 / 1C / PRS 101 / PAO1) protein is Non-homologous end joining protein Ku.